A 1904-amino-acid polypeptide reads, in one-letter code: Pericentriolar material 1 protein (1904 aa).

7 disordered regions span residues 1–135, 159–179, 265–303, 338–361, 376–407, 430–489, and 520–559; these read MATG…SGEP, QEDG…PQQE, HDSQ…QSDE, NSSF…TSAA, NSLA…EKLQ, SDMM…GTNN, and CHNR…LGDV. Positions 43-60 are enriched in basic and acidic residues; it reads RSSEKNKKKLGGEAETRL. Polar residues predominate over residues 107-118; that stretch reads INFSDLDQINTN. Residues 171–212 adopt a coiled-coil conformation; sequence SQARDPQQEAKEELENLKKQHDLLKRMLQQQEQLKALQGRQA. Residues 280 to 298 show a composition bias toward polar residues; sequence ESLSLTREISQSRNSSVSE. Residues 301–334 are a coiled coil; that stretch reads SDEKAQLFNKMRMLQGKKQKMDKLLGELHTLRDQ. Low complexity predominate over residues 338–348; sequence NSSFFPASSSP. The segment covering 349 to 361 has biased composition (polar residues); sequence QRSIDQRSTTSAA. Positions 403 to 429 form a coiled coil; the sequence is TEKLQKLNEVRKRLNELRELVHYYEQT. A compositionally biased stretch (acidic residues) spans 442 to 452; sequence KEEEETEDSGS. A compositionally biased stretch (polar residues) spans 461–470; the sequence is PVTNIRNPQG. A compositionally biased stretch (low complexity) spans 471–482; sequence ISSWSEINSNSN. Residues 520-534 are compositionally biased toward basic and acidic residues; the sequence is CHNREDDKHADLPHG. A compositionally biased stretch (acidic residues) spans 535–544; sequence EDDEVEEDRA. Coiled coils occupy residues 562-592 and 636-686; these read DAEF…VQDD and LNEK…LQSA. The disordered stretch occupies residues 686-706; it reads AGLGNSPANRQTSPATSTPAM. The span at 687 to 706 shows a compositional bias: polar residues; sequence GLGNSPANRQTSPATSTPAM. Residues 731–768 are a coiled coil; it reads SEMRRHEILREELRRRRKQLEALMAEHQRRRELAETIS. Positions 773–840 are disordered; that stretch reads SVKSEGSEAQ…PSMNDSFSAY (68 aa). Positions 779–804 are enriched in polar residues; the sequence is SEAQRTPQQSRTENRTMATWGGSTQC. Over residues 806–830 the composition is skewed to acidic residues; it reads LDEEDGDEDGYLSDGLDQAEEEEDA. Coiled-coil stretches lie at residues 895–927 and 970–1000; these read SELS…CQTL and TQLS…CQEK. 3 disordered regions span residues 991–1018, 1063–1082, and 1088–1225; these read HQQE…SPVF, GFPQ…ASGK, and FPKP…TGYD. 2 stretches are compositionally biased toward polar residues: residues 1064 to 1073 and 1093 to 1102; these read FPQSSEQQQH and ESSSSTGAEN. Over residues 1103–1117 the composition is skewed to basic and acidic residues; the sequence is QRSHRQPEDEVEKRS. The span at 1141–1150 shows a compositional bias: polar residues; that stretch reads SVQSIASGHK. Positions 1151–1162 are enriched in basic and acidic residues; the sequence is NQSDTSRRRNFD. The span at 1173–1182 shows a compositional bias: low complexity; it reads PDPVDPTTVT. The stretch at 1421 to 1447 forms a coiled coil; the sequence is IHLDQALARMREYERMKIEAESTLDSE. The span at 1616–1625 shows a compositional bias: basic and acidic residues; sequence AKEDKDETET. Disordered stretches follow at residues 1616-1741, 1774-1838, and 1865-1904; these read AKED…VKGE, MKTE…SDED, and EAQT…AQSA. The segment covering 1649–1658 has biased composition (acidic residues); sequence SDQEEDEESE. Residues 1668–1678 are compositionally biased toward polar residues; the sequence is KAETQALTNYG. Residues 1680-1695 show a composition bias toward acidic residues; that stretch reads GEDENEDEEIEFEEGP. 3 stretches are compositionally biased toward polar residues: residues 1698–1720, 1728–1737, and 1779–1791; these read VQTS…SQEL, ILSSEQQSVN, and SSSS…TQML. A compositionally biased stretch (low complexity) spans 1800–1812; that stretch reads SSAGSSESSMAGS. A compositionally biased stretch (basic and acidic residues) spans 1881–1897; the sequence is EQDRELVGDAQTLKEPE.

Belongs to the PCM1 family. Self-associates.

It localises to the cytoplasm. The protein localises to the cytoskeleton. The protein resides in the microtubule organizing center. Its subcellular location is the centrosome. It is found in the cytoplasmic granule. It localises to the centriolar satellite. The protein localises to the cilium basal body. Functionally, required for centrosome assembly and function. Essential for the correct localization of several centrosomal proteins including CETN3 and PCNT. Required to anchor microtubules to the centrosome. Probably involved in the biogenesis of cilia. This chain is Pericentriolar material 1 protein (PCM1), found in Gallus gallus (Chicken).